Reading from the N-terminus, the 895-residue chain is Zinc finger protein 574 (895 aa).

3 C2H2-type zinc fingers span residues 16–38 (YVCSECNQLYGSLEEVLMHQNSH), 76–98 (YQCLECGQLLMSPSQLLEHQELH), and 126–148 (YECVDCKALFASQELWLNHRQTH). Phosphoserine is present on S164. A C2H2-type 4 zinc finger spans residues 214–236 (YKCSECSQLFQLPADFLEHQATH). The segment at 239-301 (APVPESQEPA…RARRNNSGEA (63 aa)) is disordered. The segment covering 247-257 (PALQQEVQASS) has biased composition (polar residues). Basic and acidic residues predominate over residues 274 to 287 (HSYELRNGEAIGRD). Position 298 is a phosphoserine (S298). 4 C2H2-type zinc fingers span residues 309-331 (LFCSACDQLFLSPHQLQQHLRSH), 336-358 (FKCPLCSRVFPSPSSLDQHLGDH), 364-386 (FLCVDCGLAFGTEALLLAHRRAH), and 392-413 (HSCPCGKTFVNLTKFLYHRRTH). The disordered stretch occupies residues 434–460 (FPEPAPAETGEPEAPEPPVSEETSAGP). 6 C2H2-type zinc fingers span residues 466–489 (YRCLLCSREFGKALQLTRHQRFVH), 495–517 (HKCSICGKMFKKKSHVRNHLRTH), 523–545 (FPCPDCSKPFNSPANLARHRLTH), 551–573 (YRCGDCGKAFTQSSTLRQHRLVH), 579–601 (YRCQECGVRFHRPYRLLMHRYHH), and 607–630 (YKCRECPRSFLLRRLLEVHQLVVH). Residues 636-659 (HRCPSCGAAFPSSLRLREHRCAAA) form a C2H2-type 15; degenerate zinc finger. The segment at 667-689 (FECGTCGKKVGSAARLQAHEAAH) adopts a C2H2-type 16 zinc-finger fold. The interval 687–732 (AAHAAAGPGEVLAKEPPAPRAPRATRAPVASPAALGGTATASPAPA) is disordered. The span at 707–731 (APRATRAPVASPAALGGTATASPAP) shows a compositional bias: low complexity. S717 carries the post-translational modification Phosphoserine. T724 is subject to Phosphothreonine. A Phosphoserine modification is found at S728. 4 C2H2-type zinc fingers span residues 737 to 759 (LECSECKKLFSTETSLQVHRRIH), 765 to 787 (YPCPDCGKAFRQSTHLKDHRRLH), 793 to 815 (FACEVCGKAFAISMRLAEHRRIH), and 821 to 843 (YSCPDCGKSYRSFSNLWKHRKTH). R831 bears the Asymmetric dimethylarginine mark.

Belongs to the krueppel C2H2-type zinc-finger protein family.

It is found in the nucleus. In terms of biological role, may be involved in transcriptional regulation. This Pongo abelii (Sumatran orangutan) protein is Zinc finger protein 574 (ZNF574).